The primary structure comprises 65 residues: DNA-directed RNA polymerase subunit Rpo10 (65 aa).

Cysteine 7, cysteine 10, cysteine 44, and cysteine 45 together coordinate Zn(2+).

Belongs to the archaeal Rpo10/eukaryotic RPB10 RNA polymerase subunit family. As to quaternary structure, part of the RNA polymerase complex. It depends on Zn(2+) as a cofactor.

The protein localises to the cytoplasm. It carries out the reaction RNA(n) + a ribonucleoside 5'-triphosphate = RNA(n+1) + diphosphate. Functionally, DNA-dependent RNA polymerase (RNAP) catalyzes the transcription of DNA into RNA using the four ribonucleoside triphosphates as substrates. The protein is DNA-directed RNA polymerase subunit Rpo10 of Thermococcus onnurineus (strain NA1).